The sequence spans 582 residues: DNA polymerase IV (582 aa).

The tract at residues 127–161 is disordered; it reads NADDGQSSTDKESEISTDVESERNDDSNNKDMIQA. Basic and acidic residues predominate over residues 135-155; that stretch reads TDKESEISTDVESERNDDSNN. The tract at residues 360 to 369 is involved in ssDNA binding; the sequence is RGYSKCGDID. Residues aspartate 367, aspartate 369, and aspartate 502 each contribute to the Mg(2+) site.

This sequence belongs to the DNA polymerase type-X family. In terms of assembly, interacts with DNL4 subunit of the DNL4-LIF1 complex. Requires Mg(2+) as cofactor.

The protein localises to the nucleus. It carries out the reaction DNA(n) + a 2'-deoxyribonucleoside 5'-triphosphate = DNA(n+1) + diphosphate. Its activity is regulated as follows. Stimulated by the interaction with the DNL4-LIF1 complex. In terms of biological role, repair polymerase. Involved in gap-filling in DNA nonhomologous end joining (NHEJ) required for double-strand break repair. Seems to conduct DNA synthesis in a stepwise distributive fashion rather than in a processive fashion as for other DNA polymerases. Preferentially acts upon short gaps formed by the alignment of linear duplexes with complementary single-strand ends. Required for filling gaps that need removal of a 5'- or 3'-terminal mismatch, however lacks nuclease activities. This Saccharomyces cerevisiae (strain ATCC 204508 / S288c) (Baker's yeast) protein is DNA polymerase IV (POL4).